The primary structure comprises 308 residues: Porphobilinogen deaminase (308 aa).

Cysteine 241 carries the S-(dipyrrolylmethanemethyl)cysteine modification.

It belongs to the HMBS family. Monomer. It depends on dipyrromethane as a cofactor.

The catalysed reaction is 4 porphobilinogen + H2O = hydroxymethylbilane + 4 NH4(+). It participates in porphyrin-containing compound metabolism; protoporphyrin-IX biosynthesis; coproporphyrinogen-III from 5-aminolevulinate: step 2/4. In terms of biological role, tetrapolymerization of the monopyrrole PBG into the hydroxymethylbilane pre-uroporphyrinogen in several discrete steps. The chain is Porphobilinogen deaminase from Staphylococcus carnosus (strain TM300).